Reading from the N-terminus, the 494-residue chain is Probable terminase, large subunit (494 aa).

26 to 33 (ADVLFGKT) is an ATP binding site. The short motif at 56–63 (SGHGTGKS) is the Walker A motif element. The Walker B motif signature appears at 158–163 (LYIIDE). E163 (for ATPase activity) is an active-site residue. Mg(2+) is bound by residues D293, D356, and D446.

Belongs to the punalikevirus large terminase family. In terms of assembly, interacts with pacA protein. The cofactor is Mg(2+).

Component of the molecular motor that translocates genomic DNA in empty capsid during DNA packaging. Heterooligomerize with small terminase protein to be docked on capsid portal protein. Forms a ring-like structure through which genomic DNA is translocated into the capsid. May have or induce an endonuclease activity to cleave the genome concatemer after encapsidation. The sequence is that of Probable terminase, large subunit (pacB) from Escherichia coli (Bacteriophage P7).